Consider the following 329-residue polypeptide: Minor capsid protein A1 (329 aa).

The tract at residues 143–162 (GPSPVPGPNPDPPLEPPPGT) is disordered. Residues 145-161 (SPVPGPNPDPPLEPPPG) are compositionally biased toward pro residues.

Its subcellular location is the virion. In terms of biological role, minor capsid protein. This is Minor capsid protein A1 from Qbeta virus (strain MX1).